The primary structure comprises 340 residues: Anthranilate phosphoribosyltransferase (340 aa).

Residues Gly84, 87–88, Thr92, 94–97, 112–120, and Ser124 each bind 5-phospho-alpha-D-ribose 1-diphosphate; these read GD, NIST, and KHGSRSVSS. Gly84 is a binding site for anthranilate. A Mg(2+)-binding site is contributed by Ser96. Arg170 is a binding site for anthranilate. Mg(2+) contacts are provided by Asp228 and Glu229.

This sequence belongs to the anthranilate phosphoribosyltransferase family. Homodimer. Mg(2+) serves as cofactor.

The catalysed reaction is N-(5-phospho-beta-D-ribosyl)anthranilate + diphosphate = 5-phospho-alpha-D-ribose 1-diphosphate + anthranilate. It participates in amino-acid biosynthesis; L-tryptophan biosynthesis; L-tryptophan from chorismate: step 2/5. Its function is as follows. Catalyzes the transfer of the phosphoribosyl group of 5-phosphorylribose-1-pyrophosphate (PRPP) to anthranilate to yield N-(5'-phosphoribosyl)-anthranilate (PRA). The sequence is that of Anthranilate phosphoribosyltransferase from Psychromonas ingrahamii (strain DSM 17664 / CCUG 51855 / 37).